Consider the following 566-residue polypeptide: MGFLIRRLPKDSRIFRWLLILTVFSFIITSFSALFGMEKSIFRQLKIYQSIAHMLQVDTQDQQGSNYSANGRISKVGLERDIAWLELNTAVSTPSGEGKEEQKKTVKPVAKVEEAKEKVTVKPFPEVMGITNTTASTASVVERTKEKTTARPVPGVGEADGKRTTIALPSMKEDKEKATVKPSFGMKVAHANSTSKDKPKAEEPPASVKAIRPVTQAATVTEKKKLRAADFKTEPQWDFDDEYILDSSSPVSTCSESVRAKAAKSDWLRDLFLPNITLFIDKSYFNVSEWDRLEHFAPPYGFMELNYSLVEEVMSRLPPNPHQQLLLANSSSNVSTCISCAVVGNGGILNNSGMGQEIDSHDYVFRVSGAVIKGYEKDVGTKTSFYGFTAYSLVSSLQNLGHKGFKKIPQGKHIRYIHFLEAVRDYEWLKALLLDKDIRKGFLNYYGRRPRERFDEDFTMNKYLVAHPDFLRYLKNRFLKSKNLQKPYWRLYRPTTGALLLLTALHLCDRVSAYGYITEGHQKYSDHYYDKEWKRLVFYVNHDFNLEKQVWKRLHDENIMKLYQRS.

Residues 1 to 16 (MGFLIRRLPKDSRIFR) are Cytoplasmic-facing. A helical; Signal-anchor for type II membrane protein membrane pass occupies residues 17–37 (WLLILTVFSFIITSFSALFGM). At 38–566 (EKSIFRQLKI…ENIMKLYQRS (529 aa)) the chain is on the lumenal side. Residues asparagine 66 and asparagine 132 are each glycosylated (N-linked (GlcNAc...) asparagine). A disordered region spans residues 138–161 (ASVVERTKEKTTARPVPGVGEADG). An N-linked (GlcNAc...) asparagine glycan is attached at asparagine 192. Repeat 1 spans residues 247–254 (SSSPVSTC). The tract at residues 247–337 (SSSPVSTCSE…ANSSSNVSTC (91 aa)) is 2 X 8 AA repeats of S-S-S-X-V-S-T-C. 2 disulfide bridges follow: cysteine 254–cysteine 337 and cysteine 340–cysteine 508. Residues asparagine 275, asparagine 286, asparagine 306, asparagine 329, and asparagine 333 are each glycosylated (N-linked (GlcNAc...) asparagine). Copy 2 of the repeat occupies 330–337 (SSSNVSTC).

It belongs to the glycosyltransferase 29 family. Heart, kidney, testes, brain, liver and lung.

It is found in the golgi apparatus membrane. It catalyses the reaction a beta-D-galactosyl-(1-&gt;3)-N-acetyl-alpha-D-galactosaminyl derivative + CMP-N-acetyl-beta-neuraminate = a beta-D-galactosyl-(1-&gt;3)-[N-acetyl-alpha-neuraminyl-(2-&gt;6)]-N-acetyl-alpha-D-galactosaminyl derivative + CMP + H(+). The enzyme catalyses a 3-O-[N-acetyl-alpha-D-galactosaminyl]-L-seryl-[protein] + CMP-N-acetyl-beta-neuraminate = a 3-O-[N-acetyl-alpha-neuraminosyl-(2-&gt;6)-N-acetyl-alpha-D-galactosaminyl]-L-seryl-[protein] + CMP + H(+). It carries out the reaction a 3-O-[N-acetyl-alpha-D-galactosaminyl]-L-threonyl-[protein] + CMP-N-acetyl-beta-neuraminate = a 3-O-[N-acetyl-alpha-neuraminosyl-(2-&gt;6)-N-acetyl-alpha-D-galactosaminyl]-L-threonyl-[protein] + CMP + H(+). The catalysed reaction is a 3-O-[beta-D-galactosyl-(1-&gt;3)-N-acetyl-alpha-D-galactosaminyl]-L-seryl-[protein] + CMP-N-acetyl-beta-neuraminate = a 3-O-{beta-D-galactosyl-(1-&gt;3)-[N-acetyl-alpha-neuraminosyl-(2-&gt;6)]-N-acetyl-alpha-D-galactosaminyl}-L-seryl-[protein] + CMP + H(+). It catalyses the reaction a 3-O-[beta-D-galactosyl-(1-&gt;3)-N-acetyl-alpha-D-galactosaminyl]-L-threonyl-[protein] + CMP-N-acetyl-beta-neuraminate = a 3-O-{beta-D-galactosyl-(1-&gt;3)-[N-acetyl-alpha-neuraminosyl-(2-&gt;6)]-N-acetyl-alpha-D-galactosaminyl}-L-threonyl-[protein] + CMP + H(+). The enzyme catalyses a 3-O-[N-acetyl-alpha-neuraminyl-(2-&gt;3)-beta-D-galactosyl-(1-&gt;3)-N-acetyl-alpha-D-galactosaminyl]-L-threonyl-[protein] + CMP-N-acetyl-beta-neuraminate = a 3-O-{alpha-Neu5Ac-(2-&gt;3)-beta-D-Gal-(1-&gt;3)-[alpha-Neu5Ac-(2-&gt;6)]-alpha-D-GalNAc}-L-threonyl-[protein] + CMP + H(+). It participates in protein modification; protein glycosylation. Protein sialyltransferase specifically expressed in goblet cells that plays a key role in intestinal host-commensal homeostasis. Conjugates sialic acid with an alpha-2-6 linkage to N-acetylgalactosamine (GalNAc) glycan chains linked to serine or threonine in glycoproteins. Generates sialylated T and Tn antigens.. In Gallus gallus (Chicken), this protein is Alpha-N-acetylgalactosaminide alpha-2,6-sialyltransferase 1 (ST6GALNAC1).